Reading from the N-terminus, the 173-residue chain is Flagellar biosynthetic protein FliV (173 aa).

It belongs to the FliB family.

Functionally, required for the secretion of flagellin and expression of motility. In Salmonella muenchen, this protein is Flagellar biosynthetic protein FliV (fliV).